The chain runs to 109 residues: C-X-C motif chemokine 13 (109 aa).

Residues 1 to 21 (MRLSTATLLLLLASCLSPGHG) form the signal peptide. Intrachain disulfides connect cysteine 32–cysteine 59 and cysteine 34–cysteine 75.

Belongs to the intercrine alpha (chemokine CxC) family. Found in spleen (B-cell-rich zone or follicles), Peyer patches (strongest within germinal centers and extending to the mantle zone) and lymph nodes (in reticular pattern in follicles).

It is found in the secreted. Strongly chemotactic for B-lymphocytes, weakly for spleen monocytes and macrophages but no chemotactic activity for granulocytes. Binds to BLR1/CXCR5. May play a role in directing the migration of B-lymphocytes to follicles in secondary lymphoid organs. This is C-X-C motif chemokine 13 (Cxcl13) from Mus musculus (Mouse).